Consider the following 737-residue polypeptide: Photosystem I P700 chlorophyll a apoprotein A2 (737 aa).

8 consecutive transmembrane segments (helical) span residues 46–69 (LFSTHFGHLAIIGLWVSGNLFHIA), 135–158 (LYQGSIFMMILSAWALFAGWLHLQ), 175–199 (LNHHLAVLFGFSSIAWTGHLVHVAI), 273–291 (IAHHHLAIGCIFVIAGHMY), 333–356 (LHFQLGLALASLGVVTSLVAQHMY), 372–398 (AALYTHHQYIAIALMCGAFAHGAIFFI), 420–442 (AIISHLSWVSLFLGFHTLGLYVH), and 520–538 (FLVHHAIALGLHTTTLILV). [4Fe-4S] cluster is bound by residues Cys562 and Cys571. A run of 2 helical transmembrane segments spans residues 578-599 (AFYLAVFWALNTVGWLTFYWHW) and 646-668 (LAVWAWMFLFGHLVWATGFMFLI). The chlorophyll a site is built by His657, Met665, and Tyr673. A phylloquinone-binding site is contributed by Trp674. Residues 710–730 (VVGLAHFTVGYVLTYAAFLIA) form a helical membrane-spanning segment.

It belongs to the PsaA/PsaB family. The PsaA/B heterodimer binds the P700 chlorophyll special pair and subsequent electron acceptors. PSI consists of a core antenna complex that captures photons, and an electron transfer chain that converts photonic excitation into a charge separation. The cyanobacterial PSI reaction center is composed of one copy each of PsaA,B,C,D,E,F,I,J,K,L,M and X, and forms trimeric complexes. PSI electron transfer chain: 5 chlorophyll a, 1 chlorophyll a', 2 phylloquinones and 3 4Fe-4S clusters. PSI core antenna: 90 chlorophyll a, 22 carotenoids, 3 phospholipids and 1 galactolipid. P700 is a chlorophyll a/chlorophyll a' dimer, A0 is one or more chlorophyll a, A1 is one or both phylloquinones and FX is a shared 4Fe-4S iron-sulfur center. is required as a cofactor.

It localises to the cellular thylakoid membrane. It carries out the reaction reduced [plastocyanin] + hnu + oxidized [2Fe-2S]-[ferredoxin] = oxidized [plastocyanin] + reduced [2Fe-2S]-[ferredoxin]. Functionally, psaA and PsaB bind P700, the primary electron donor of photosystem I (PSI), as well as the electron acceptors A0, A1 and FX. PSI is a plastocyanin/cytochrome c6-ferredoxin oxidoreductase, converting photonic excitation into a charge separation, which transfers an electron from the donor P700 chlorophyll pair to the spectroscopically characterized acceptors A0, A1, FX, FA and FB in turn. Oxidized P700 is reduced on the lumenal side of the thylakoid membrane by plastocyanin or cytochrome c6. The protein is Photosystem I P700 chlorophyll a apoprotein A2 of Synechococcus sp. (strain CC9605).